A 297-amino-acid polypeptide reads, in one-letter code: MSFDQLHRYLFNQAHVRGELVRLENSYQSILDSYAYPPVIQKLLGELMAATSLLTATLKFEGDIALQLQSDGPVNYAVINGTHDQQLRGVARWDESLAELPTDFSQLFTKGILVITITPEDGERYQGMVALDKPTLAECIESYFQQSEQLATKVILRTQQTDSGAKACGMFLQILPTSSQATATTDTGFEHLAKLTETIKNEELFSLPAEDILYRLYHQEEIEVYPPADIIFKCSCSRERSANALAAVEKAELLDIVATEGAIKMNCQYCHREYRFDEIDVHAIHAGTFAMDTQNDQ.

2 cysteine pairs are disulfide-bonded: Cys234–Cys236 and Cys267–Cys270.

The protein belongs to the HSP33 family. In terms of processing, under oxidizing conditions two disulfide bonds are formed involving the reactive cysteines. Under reducing conditions zinc is bound to the reactive cysteines and the protein is inactive.

The protein resides in the cytoplasm. Functionally, redox regulated molecular chaperone. Protects both thermally unfolding and oxidatively damaged proteins from irreversible aggregation. Plays an important role in the bacterial defense system toward oxidative stress. This is 33 kDa chaperonin from Pseudoalteromonas atlantica (strain T6c / ATCC BAA-1087).